The chain runs to 182 residues: Large ribosomal subunit protein bL19m (182 aa).

The N-terminal 21 residues, 1–21, are a transit peptide targeting the mitochondrion; it reads MFNAKHFFNLGLGFQWLQKRG.

Belongs to the bacterial ribosomal protein bL19 family. In terms of assembly, component of the mitochondrial large ribosomal subunit (mt-LSU). Mature yeast 74S mitochondrial ribosomes consist of a small (37S) and a large (54S) subunit. The 37S small subunit contains a 15S ribosomal RNA (15S mt-rRNA) and at least 32 different proteins. The 54S large subunit contains a 21S rRNA (21S mt-rRNA) and at least 45 different proteins.

It is found in the mitochondrion. Its function is as follows. Component of the mitochondrial ribosome (mitoribosome), a dedicated translation machinery responsible for the synthesis of mitochondrial genome-encoded proteins, including at least some of the essential transmembrane subunits of the mitochondrial respiratory chain. The mitoribosomes are attached to the mitochondrial inner membrane and translation products are cotranslationally integrated into the membrane. bL19m is essential for respiration. This chain is Large ribosomal subunit protein bL19m (img1), found in Schizosaccharomyces pombe (strain 972 / ATCC 24843) (Fission yeast).